Reading from the N-terminus, the 208-residue chain is Methyl-CpG-binding domain protein 3-like 2 (208 aa).

Positions 1-89 are interacts with MBD3; it reads MGEPAFTSFP…HLEKPQQLCA (89 aa).

This sequence belongs to the MBD3L family. Interacts (via N-terminus) with MBD3; the interaction is direct. Interacts with MTA1. Interacts with HDAC1. Interacts with HDAC2. Interacts with RBBP4. Interacts with RBBP7. Detected at low levels in several somatic tissues. Highly expressed in the ovarian teratocarcinoma cell line PA-1.

Its subcellular location is the nucleus. May displace the NuRD complex from chromatin. In Homo sapiens (Human), this protein is Methyl-CpG-binding domain protein 3-like 2 (MBD3L2).